Here is a 352-residue protein sequence, read N- to C-terminus: MVFRIASSPYTHNQRQTSRIMLLVLLAAVPGIAAQLWFFGWGTLVQILLASVSALLAEALVLKLRKQSVAATLKDNSALLTGLLLAVSIPPLAPWWMVVLGTVFAAIIAKQLYGGLGQNPFNPAMIGYVVLLISFPVQMTSWLPPHEIAVNIPGFIDAIQVIFSGHTASGGDMNTLRLGIDGISQATPLDTFKTSVRAGHSVEQIMQYPIYSGILAGAGWQWVNLAWLAGGLWLLWQKAIRWHIPLSFLVTLALCATLGWLFSPETLAAPQIHLLSGATMLGAFFILTDPVTASTTNRGRLIFGALAGLLVWLIRSFGGYPDGVAFAVLLANITVPLIDYYTRPRVYGHRKG.

The next 4 membrane-spanning stretches (helical) occupy residues 20–40 (IMLLVLLAAVPGIAAQLWFFG), 42–62 (GTLVQILLASVSALLAEALVL), 89–109 (IPPLAPWWMVVLGTVFAAIIA), and 123–143 (PAMIGYVVLLISFPVQMTSWL). T187 carries the post-translational modification FMN phosphoryl threonine. 5 helical membrane-spanning segments follow: residues 214 to 234 (ILAGAGWQWVNLAWLAGGLWL), 242 to 262 (WHIPLSFLVTLALCATLGWLF), 267 to 287 (LAAPQIHLLSGATMLGAFFIL), 301 to 321 (LIFGALAGLLVWLIRSFGGYP), and 322 to 342 (DGVAFAVLLANITVPLIDYYT).

This sequence belongs to the NqrB/RnfD family. As to quaternary structure, the complex is composed of six subunits: RsxA, RsxB, RsxC, RsxD, RsxE and RsxG. The cofactor is FMN.

The protein localises to the cell inner membrane. Its function is as follows. Part of a membrane-bound complex that couples electron transfer with translocation of ions across the membrane. Required to maintain the reduced state of SoxR. This chain is Ion-translocating oxidoreductase complex subunit D, found in Escherichia coli (strain ATCC 8739 / DSM 1576 / NBRC 3972 / NCIMB 8545 / WDCM 00012 / Crooks).